A 168-amino-acid chain; its full sequence is Large ribosomal subunit protein uL10 (168 aa).

This sequence belongs to the universal ribosomal protein uL10 family. As to quaternary structure, part of the ribosomal stalk of the 50S ribosomal subunit. The N-terminus interacts with L11 and the large rRNA to form the base of the stalk. The C-terminus forms an elongated spine to which L12 dimers bind in a sequential fashion forming a multimeric L10(L12)X complex.

Forms part of the ribosomal stalk, playing a central role in the interaction of the ribosome with GTP-bound translation factors. This is Large ribosomal subunit protein uL10 from Ralstonia nicotianae (strain ATCC BAA-1114 / GMI1000) (Ralstonia solanacearum).